The chain runs to 305 residues: Sulfate adenylyltransferase subunit 2 (305 aa).

The protein belongs to the PAPS reductase family. CysD subfamily. Heterodimer composed of CysD, the smaller subunit, and CysN.

It carries out the reaction sulfate + ATP + H(+) = adenosine 5'-phosphosulfate + diphosphate. The protein operates within sulfur metabolism; hydrogen sulfide biosynthesis; sulfite from sulfate: step 1/3. Its function is as follows. With CysN forms the ATP sulfurylase (ATPS) that catalyzes the adenylation of sulfate producing adenosine 5'-phosphosulfate (APS) and diphosphate, the first enzymatic step in sulfur assimilation pathway. APS synthesis involves the formation of a high-energy phosphoric-sulfuric acid anhydride bond driven by GTP hydrolysis by CysN coupled to ATP hydrolysis by CysD. This chain is Sulfate adenylyltransferase subunit 2, found in Pseudomonas savastanoi pv. phaseolicola (strain 1448A / Race 6) (Pseudomonas syringae pv. phaseolicola (strain 1448A / Race 6)).